The following is a 381-amino-acid chain: Guanine nucleotide-binding protein subunit alpha-12 (381 aa).

Cys11 carries the S-palmitoyl cysteine lipid modification. In terms of domain architecture, G-alpha spans Arg56–Gln381. The tract at residues Lys59–Thr72 is G1 motif. Residues Glu67–Thr72 and Leu202–Arg205 each bind GTP. Ser71 provides a ligand contact to Mg(2+). The interval Asp200 to Thr208 is G2 motif. Thr208 serves as a coordination point for Mg(2+). Residue Thr208 is modified to Phosphothreonine. Positions Phe223–Arg232 are G3 motif. The tract at residues Ile292–Asp299 is G4 motif. GTP contacts are provided by residues Asn296–Asp299 and Ala353. A G5 motif region spans residues Thr351–Thr356.

It belongs to the G-alpha family. G(12) subfamily. As to quaternary structure, g proteins are composed of 3 units; alpha, beta and gamma. The alpha chain contains the guanine nucleotide binding site. Interacts with UBXD5. Interacts (in GTP-bound form) with PPP5C (via TPR repeats); activates PPP5C phosphatase activity and translocates PPP5C to the cell membrane. Interacts with RGS22. Interacts (via N-terminus) with NAPA; the interaction promotes CDH5 localization to plasma membrane. Interacts with CTNND1 (via N-terminus); the interaction regulates CDH1-mediated cell-cell adhesion. Interacts with PPP2R1A; the interaction promotes protein phosphatase 2A activation causing dephosphorylation of MAPT. Interacts (in GTP-bound form) with ARHGEF1. Interacts (in GTP-bound form) with ARHGEF11 (via RGS domain). Interacts (in GTP-bound form) with ARHGEF12 (via RGS domain).

It is found in the cell membrane. The protein localises to the lateral cell membrane. It localises to the cytoplasm. Its function is as follows. Guanine nucleotide-binding proteins (G proteins) are involved as modulators or transducers in various transmembrane signaling systems. Activates effector molecule RhoA by binding and activating RhoGEFs (ARHGEF12/LARG). GNA12-dependent Rho signaling subsequently regulates transcription factor AP-1 (activating protein-1). GNA12-dependent Rho signaling also regulates protein phosphatese 2A activation causing dephosphorylation of its target proteins. Promotes tumor cell invasion and metastasis by activating RhoA/ROCK signaling pathway and up-regulating pro-inflammatory cytokine production. Inhibits CDH1-mediated cell adhesion in process independent from Rho activation. Together with NAPA promotes CDH5 localization to plasma membrane. May play a role in the control of cell migration through the TOR signaling cascade. In Homo sapiens (Human), this protein is Guanine nucleotide-binding protein subunit alpha-12 (GNA12).